Here is a 636-residue protein sequence, read N- to C-terminus: ATP-dependent zinc metalloprotease FtsH 1 (636 aa).

Residues 1–18 (MKLSPPKKNLPPQKNNEP) lie on the Cytoplasmic side of the membrane. A helical membrane pass occupies residues 19–39 (PFPYLRLLVQVGIALFLVWIW). The Periplasmic segment spans residues 40 to 126 (QESLHKATVS…YGSVKPSLLS (87 aa)). The chain crosses the membrane as a helical span at residues 127–147 (QILFSWVVPILIFFLVWFALA). Topologically, residues 148-636 (RFMGGGGAGY…KEAPSYSSTL (489 aa)) are cytoplasmic. 220 to 227 (GPPGTGKT) contacts ATP. Residue histidine 442 coordinates Zn(2+). Glutamate 443 is an active-site residue. Zn(2+) is bound by residues histidine 446 and aspartate 519.

In the central section; belongs to the AAA ATPase family. The protein in the C-terminal section; belongs to the peptidase M41 family. In terms of assembly, homohexamer. Zn(2+) serves as cofactor.

Its subcellular location is the cell inner membrane. Functionally, acts as a processive, ATP-dependent zinc metallopeptidase for both cytoplasmic and membrane proteins. Plays a role in the quality control of integral membrane proteins. The protein is ATP-dependent zinc metalloprotease FtsH 1 of Methylacidiphilum infernorum (isolate V4) (Methylokorus infernorum (strain V4)).